The following is a 680-amino-acid chain: Collagen alpha-1(X) chain (680 aa).

Residues 1–18 form the signal peptide; that stretch reads MLPQIPFLLLMFLTLVHG. A nonhelical region (NC2) region spans residues 19 to 56; sequence MFYAERYQTPTGIKGPLASPKTQYFIPYAIKSKGIPVR. The segment at 54 to 531 is disordered; it reads PVRGEQGIPG…PDGFIKAGQR (478 aa). The tract at residues 57 to 519 is triple-helical region; it reads GEQGIPGPPG…PGPPGPPGQA (463 aa). Composition is skewed to pro residues over residues 137 to 147 and 207 to 216; these read PRGPPGPPGIP and PQGPIGPPGP. Low complexity-rich tracts occupy residues 303 to 321, 373 to 382, and 391 to 409; these read LPGLRGQRGPAGLPGAPGA, PGARGARGPP, and PGEPGLNGPKGNPGLPGQK. The segment covering 410-419 has biased composition (gly residues); it reads GDPGVGGTPG. Composition is skewed to low complexity over residues 423 to 433 and 442 to 453; these read PVGPVGAKGVP and RGEPGIPGTRGP. Over residues 506–516 the composition is skewed to pro residues; the sequence is LPGPPGPPGPP. The tract at residues 520–680 is nonhelical region (NC1); that stretch reads VMPDGFIKAG…SFSGFLVAPM (161 aa). A C1q domain is found at 547–680; it reads TGMPVSAFTV…SFSGFLVAPM (134 aa). Residues Asp-626, Glu-627, Leu-633, and Asp-634 each contribute to the Ca(2+) site.

In terms of assembly, homotrimer. Prolines at the third position of the tripeptide repeating unit (G-X-Y) are hydroxylated in some or all of the chains.

Its subcellular location is the secreted. The protein localises to the extracellular space. It localises to the extracellular matrix. Functionally, type X collagen is a product of hypertrophic chondrocytes and has been localized to presumptive mineralization zones of hyaline cartilage. This Mus musculus (Mouse) protein is Collagen alpha-1(X) chain (Col10a1).